Here is a 714-residue protein sequence, read N- to C-terminus: MSEEIITPVYCTGVSAQVQKQRARELGLGRHENAIKYLGQDYEQLRVRCLQSGTLFRDEAFPPVPQSLGYKDLGPNSSKTYGIKWKRPTELLSNPQFIVDGATRTDICQGALGDCWLLAAIASLTLNDTLLHRVVPHGQSFQNGYAGIFHFQLWQFGEWVDVVVDDLLPIKDGKLVFVHSAEGNEFWSALLEKAYAKVNGSYEALSGGSTSEGFEDFTGGVTEWYELRKAPSDLYQIILKALERGSLLGCSIDISSVLDMEAITFKKLVKGHAYSVTGAKQVNYRGQMVSLIRMRNPWGEVEWTGAWSDSSSEWNNVDPYERDQLRVKMEDGEFWMSFRDFMREFTRLEICNLTPDALKSRTIRKWNTTLYEGTWRRGSTAGGCRNYPATFWVNPQFKIRLDETDDPDDYGDRESGCSFVLALMQKHRRRERRFGRDMETIGFAVYEVPPELAGQPAVHLKRDFFLANASRARSEQFINLREVSTRFRLPPGEYVVVPSTFEPNKEGDFVLRFFSEKSAGTAELDDQIQANLPDEQVLSEEEIDENFKALFRQLAGEDMETSVKELRTILNRIISKHKDLRTKGFSLESCRSMVNLMDRDGNGKLGLVEFNILWNRIRNYLSIFRKFDLDKSGSMSAYEMRMAIESAGFKLNKKLYELIITRYSEPDLAVDFDNFVCCLVRLETMFRFFKTLDTDLDGVVTFDLFKWLQLTMFA.

Residues 55-354 form the Calpain catalytic domain; it reads LFRDEAFPPV…FTRLEICNLT (300 aa). Ca(2+) contacts are provided by Q109 and D114. Catalysis depends on residues C115, H272, and N296. Residues N316, D318, and D323 each contribute to the Ca(2+) site. A Phosphothreonine modification is found at T354. Residues 355–526 are domain III; that stretch reads PDALKSRTIR…KSAGTAELDD (172 aa). Positions 527 to 542 are linker; sequence QIQANLPDEQVLSEEE. EF-hand domains lie at 541–576, 585–618, 615–650, and 680–714; these read EEID…IISK, FSLE…NRIR, NRIR…AGFK, and VRLE…TMFA. Residues 543 to 713 form a domain IV region; that stretch reads IDENFKALFR…LFKWLQLTMF (171 aa). D598, D600, N602, K604, E609, D628, D630, S632, S634, and E639 together coordinate Ca(2+).

This sequence belongs to the peptidase C2 family. Forms a heterodimer with a small (regulatory) subunit CAPNS1. The cofactor is Ca(2+). In terms of processing, undergoes calcium-induced successive autoproteolytic cleavages that generate a membrane-bound 78 kDa active form and an intracellular 75 kDa active form. Calpastatin reduces with high efficiency the transition from 78 kDa to 75 kDa calpain forms.

It is found in the cytoplasm. It localises to the cell membrane. It catalyses the reaction Broad endopeptidase specificity.. Its activity is regulated as follows. Activated by micromolar concentrations of calcium and inhibited by calpastatin. Functionally, calcium-regulated non-lysosomal thiol-protease which catalyzes limited proteolysis of substrates involved in cytoskeletal remodeling and signal transduction. Proteolytically cleaves CTBP1. Cleaves and activates caspase-7 (CASP7). This is Calpain-1 catalytic subunit from Pongo abelii (Sumatran orangutan).